The following is a 616-amino-acid chain: MKQSKMLIPTLREMPSDAQVISHALMLRAGYVRQVSAGVYSYLPLANRVIEKAKRIMREEFDKIGAVEMLAPALLSADLWRESGRYETYGEDLYKLKNREKSDFILGPTHEETFTAIVRDSVKSYKQLPLNLYQIQPKYRDEKRPRNGLLRTREFIMKDAYSFHANYDSLDVAYDEYKSAYEKIFTRSELDFKAIIGDGGAMGGKDSQEFMAITPDRTDLNRWVVLDKSVASFDEIPEDVQEAIRTELTSWMVSGEDTIAYSSESSYAANLEMATDEYKPAGRVVTEEEVARVSTPDCKTIDEVAAFLGLDESQTIKTLVYMADESPVVALLVGNDQLNEVKLKNHLAADFFDVASEDQVRQLLGAGFGSLGPVNLPEGVRIIADRKVQDLANAVVGANEDGYHLTGVNPGRDFTAEFVDIREVREGEISPDGQGVLKFARGIEIGHIFKLGTRYSDSMNANVLDENGRAVPMIMGCYGIGVSRLLSAVMEQHARLFVNKTPKGEFRYAWGINFPKELAPFDVHLIPVNVKDEEALALTDQIEANLLSAGYEVLVDDRNERAGVKFSDSDLIGLPIRVTVGKKAAEGIVEVKIKATGDTIEVHADNLLETLSILTK.

Belongs to the class-II aminoacyl-tRNA synthetase family. ProS type 1 subfamily. As to quaternary structure, homodimer.

The protein localises to the cytoplasm. It carries out the reaction tRNA(Pro) + L-proline + ATP = L-prolyl-tRNA(Pro) + AMP + diphosphate. In terms of biological role, catalyzes the attachment of proline to tRNA(Pro) in a two-step reaction: proline is first activated by ATP to form Pro-AMP and then transferred to the acceptor end of tRNA(Pro). As ProRS can inadvertently accommodate and process non-cognate amino acids such as alanine and cysteine, to avoid such errors it has two additional distinct editing activities against alanine. One activity is designated as 'pretransfer' editing and involves the tRNA(Pro)-independent hydrolysis of activated Ala-AMP. The other activity is designated 'posttransfer' editing and involves deacylation of mischarged Ala-tRNA(Pro). The misacylated Cys-tRNA(Pro) is not edited by ProRS. The sequence is that of Proline--tRNA ligase from Streptococcus sanguinis (strain SK36).